Here is a 363-residue protein sequence, read N- to C-terminus: Holliday junction branch migration complex subunit RuvB (363 aa).

Residues 1–32 are disordered; that stretch reads MSDVERTEFEIPGGIPPRRNGGQGRAADTNVD. The tract at residues 27–207 is large ATPase domain (RuvB-L); the sequence is ADTNVDANLK…FGFTAQMEFY (181 aa). ATP is bound by residues Leu-46, Arg-47, Gly-88, Lys-91, Thr-92, Thr-93, 154–156, Arg-197, Tyr-207, and Arg-244; that span reads EDF. Residue Thr-92 participates in Mg(2+) binding. Residues 208-278 form a small ATPAse domain (RuvB-S) region; sequence DVPDLTKVVK…AANAALIVFD (71 aa). A head domain (RuvB-H) region spans residues 281–363; it reads EVGLDRLDRA…EPPEGTIGDY (83 aa). The DNA site is built by Arg-336 and Arg-341.

The protein belongs to the RuvB family. In terms of assembly, homohexamer. Forms an RuvA(8)-RuvB(12)-Holliday junction (HJ) complex. HJ DNA is sandwiched between 2 RuvA tetramers; dsDNA enters through RuvA and exits via RuvB. An RuvB hexamer assembles on each DNA strand where it exits the tetramer. Each RuvB hexamer is contacted by two RuvA subunits (via domain III) on 2 adjacent RuvB subunits; this complex drives branch migration. In the full resolvosome a probable DNA-RuvA(4)-RuvB(12)-RuvC(2) complex forms which resolves the HJ.

It is found in the cytoplasm. It catalyses the reaction ATP + H2O = ADP + phosphate + H(+). Its function is as follows. The RuvA-RuvB-RuvC complex processes Holliday junction (HJ) DNA during genetic recombination and DNA repair, while the RuvA-RuvB complex plays an important role in the rescue of blocked DNA replication forks via replication fork reversal (RFR). RuvA specifically binds to HJ cruciform DNA, conferring on it an open structure. The RuvB hexamer acts as an ATP-dependent pump, pulling dsDNA into and through the RuvAB complex. RuvB forms 2 homohexamers on either side of HJ DNA bound by 1 or 2 RuvA tetramers; 4 subunits per hexamer contact DNA at a time. Coordinated motions by a converter formed by DNA-disengaged RuvB subunits stimulates ATP hydrolysis and nucleotide exchange. Immobilization of the converter enables RuvB to convert the ATP-contained energy into a lever motion, pulling 2 nucleotides of DNA out of the RuvA tetramer per ATP hydrolyzed, thus driving DNA branch migration. The RuvB motors rotate together with the DNA substrate, which together with the progressing nucleotide cycle form the mechanistic basis for DNA recombination by continuous HJ branch migration. Branch migration allows RuvC to scan DNA until it finds its consensus sequence, where it cleaves and resolves cruciform DNA. The polypeptide is Holliday junction branch migration complex subunit RuvB (Corynebacterium glutamicum (strain R)).